The sequence spans 558 residues: Potassium-transporting ATPase potassium-binding subunit 1 (558 aa).

Transmembrane regions (helical) follow at residues 1–21, 66–86, 127–147, 166–186, 245–265, 281–301, 327–347, 354–374, 377–397, 416–436, 482–502, and 531–551; these read MEIILFLTMMVMITYVFSGYL, FNGFMGFITFVLLIVQQWLFL, MIVMTYLMFTSSASGYAVCIA, IVRFIVRVLLPLSCLISILLM, IWSNFIEMGSMMLLPMSMLFL, ALILFVAMFFIFIAILTLTMW, FGAGLSALFTVITTAFTTGSV, LTPIGGLGPMVLMMLNVVFGG, VGLMNLLIFVLLTVFICSLMV, IVLVFLIHPILILVFSALAFM, ISTGIIMLLSRYIPIILQLMI, and IVFIVLLSGLTFIPVLLLGPI.

The protein belongs to the KdpA family. The system is composed of three essential subunits: KdpA, KdpB and KdpC.

The protein localises to the cell membrane. Its function is as follows. Part of the high-affinity ATP-driven potassium transport (or Kdp) system, which catalyzes the hydrolysis of ATP coupled with the electrogenic transport of potassium into the cytoplasm. This subunit binds the extracellular potassium ions and delivers the ions to the membrane domain of KdpB through an intramembrane tunnel. This Staphylococcus aureus (strain Mu50 / ATCC 700699) protein is Potassium-transporting ATPase potassium-binding subunit 1.